The following is a 355-amino-acid chain: UDP-N-acetylglucosamine--N-acetylmuramyl-(pentapeptide) pyrophosphoryl-undecaprenol N-acetylglucosamine transferase (355 aa).

UDP-N-acetyl-alpha-D-glucosamine-binding positions include 12–14 (TGG), N124, R160, S192, I243, 262–267 (ALTVCE), and Q287.

This sequence belongs to the glycosyltransferase 28 family. MurG subfamily.

Its subcellular location is the cell inner membrane. The enzyme catalyses di-trans,octa-cis-undecaprenyl diphospho-N-acetyl-alpha-D-muramoyl-L-alanyl-D-glutamyl-meso-2,6-diaminopimeloyl-D-alanyl-D-alanine + UDP-N-acetyl-alpha-D-glucosamine = di-trans,octa-cis-undecaprenyl diphospho-[N-acetyl-alpha-D-glucosaminyl-(1-&gt;4)]-N-acetyl-alpha-D-muramoyl-L-alanyl-D-glutamyl-meso-2,6-diaminopimeloyl-D-alanyl-D-alanine + UDP + H(+). Its pathway is cell wall biogenesis; peptidoglycan biosynthesis. Cell wall formation. Catalyzes the transfer of a GlcNAc subunit on undecaprenyl-pyrophosphoryl-MurNAc-pentapeptide (lipid intermediate I) to form undecaprenyl-pyrophosphoryl-MurNAc-(pentapeptide)GlcNAc (lipid intermediate II). The protein is UDP-N-acetylglucosamine--N-acetylmuramyl-(pentapeptide) pyrophosphoryl-undecaprenol N-acetylglucosamine transferase of Haemophilus ducreyi (strain 35000HP / ATCC 700724).